A 273-amino-acid polypeptide reads, in one-letter code: 4-hydroxy-tetrahydrodipicolinate reductase (273 aa).

NAD(+) contacts are provided by residues G11–M16 and G106–T108. H162 serves as the catalytic Proton donor/acceptor. H163 lines the (S)-2,3,4,5-tetrahydrodipicolinate pocket. Catalysis depends on K166, which acts as the Proton donor. Residue G172 to T173 coordinates (S)-2,3,4,5-tetrahydrodipicolinate.

This sequence belongs to the DapB family.

The protein localises to the cytoplasm. The enzyme catalyses (S)-2,3,4,5-tetrahydrodipicolinate + NAD(+) + H2O = (2S,4S)-4-hydroxy-2,3,4,5-tetrahydrodipicolinate + NADH + H(+). The catalysed reaction is (S)-2,3,4,5-tetrahydrodipicolinate + NADP(+) + H2O = (2S,4S)-4-hydroxy-2,3,4,5-tetrahydrodipicolinate + NADPH + H(+). Its pathway is amino-acid biosynthesis; L-lysine biosynthesis via DAP pathway; (S)-tetrahydrodipicolinate from L-aspartate: step 4/4. Its function is as follows. Catalyzes the conversion of 4-hydroxy-tetrahydrodipicolinate (HTPA) to tetrahydrodipicolinate. This Synechococcus elongatus (strain ATCC 33912 / PCC 7942 / FACHB-805) (Anacystis nidulans R2) protein is 4-hydroxy-tetrahydrodipicolinate reductase.